The sequence spans 144 residues: Peptide methionine sulfoxide reductase MsrB (144 aa).

One can recognise a MsrB domain in the interval 5-128 (KEELRQRIGE…NSAALQFIPV (124 aa)). Cys-117 (nucleophile) is an active-site residue.

This sequence belongs to the MsrB Met sulfoxide reductase family.

The enzyme catalyses L-methionyl-[protein] + [thioredoxin]-disulfide + H2O = L-methionyl-(R)-S-oxide-[protein] + [thioredoxin]-dithiol. The sequence is that of Peptide methionine sulfoxide reductase MsrB from Ligilactobacillus salivarius (strain UCC118) (Lactobacillus salivarius).